Reading from the N-terminus, the 263-residue chain is Hydroxyacylglutathione hydrolase (263 aa).

Zn(2+)-binding residues include H56, H58, D60, H61, H115, D135, and H175.

The protein belongs to the metallo-beta-lactamase superfamily. Glyoxalase II family. In terms of assembly, monomer. The cofactor is Zn(2+).

The enzyme catalyses an S-(2-hydroxyacyl)glutathione + H2O = a 2-hydroxy carboxylate + glutathione + H(+). The protein operates within secondary metabolite metabolism; methylglyoxal degradation; (R)-lactate from methylglyoxal: step 2/2. In terms of biological role, thiolesterase that catalyzes the hydrolysis of S-D-lactoyl-glutathione to form glutathione and D-lactic acid. The chain is Hydroxyacylglutathione hydrolase from Nitrosococcus oceani (strain ATCC 19707 / BCRC 17464 / JCM 30415 / NCIMB 11848 / C-107).